We begin with the raw amino-acid sequence, 85 residues long: Scratcher peptide (85 aa).

A signal peptide spans 1–24; that stretch reads MTSVQSVTCCCLLWLMLSVQPITP. Positions 25–38 are excised as a propeptide; the sequence is GSPGPAQLSRERSF. Glu-47 is modified (4-carboxyglutamate). Asp-67 is subject to Aspartic acid 1-amide. A propeptide spanning residues 68-85 is cleaved from the precursor; the sequence is KRDVVSPRIRRRKRSKAM.

Belongs to the conotoxin J superfamily. In terms of processing, contains 2 disulfide bonds. Expressed by the venom duct.

The protein localises to the secreted. Functionally, causes scratching in mice. This Conus geographus (Geography cone) protein is Scratcher peptide.